The sequence spans 68 residues: Pantinin-3 (68 aa).

The N-terminal stretch at 1 to 23 is a signal peptide; sequence MKTQFAILLIALVLFQLLSQSDA. Leu-36 is subject to Leucine amide. Residues 40-68 constitute a propeptide that is removed on maturation; sequence GLNELDNLDELFDGEISQADIDFLKELMS.

The protein belongs to the non-disulfide-bridged peptide (NDBP) superfamily. Short antimicrobial peptide (group 4) family. In terms of tissue distribution, expressed by the venom gland.

The protein localises to the secreted. Its subcellular location is the target cell membrane. Its function is as follows. Amphipathic peptide that possesses relatively strong activities against Gram-positive bacteria and a fungus, but has very weak antimicrobial activities against Gram-negative bacteria. Also exhibits mild hemolytic activities against human erythrocytes (16 uM induce 70% of hemolysis). Furthermore, this peptide potently inhibits the growth of vancomycin-resistant Enterococcus (VRE) S13, a pathogen that can cause a number of human infections. Minimal inhibitory concentration (MIC) are the following: 16 uM against S.aureus, 6 uM against B.magaterium, 8 uM against M.luteus, 4 uM against VRE, 12 uM against methicillin-resistant S.aureus, 36 uM against E.coli, &gt;87 uM against P.putida, 87 uM against K.oxytoca, &gt;87 uM against E.cloacae, 84 uM against S.enterica and 17 uM against the fungus C.tropicalis. This is Pantinin-3 from Pandinus imperator (Emperor scorpion).